The primary structure comprises 235 residues: Uridylate kinase (235 aa).

An ATP-binding site is contributed by 9–12 (KLSG). The involved in allosteric activation by GTP stretch occupies residues 17 to 22 (GNQGYG). Glycine 51 provides a ligand contact to UMP. Glycine 52 and arginine 56 together coordinate ATP. UMP-binding positions include aspartate 71 and 132-139 (CGNPFFTT). Threonine 159, tyrosine 165, and aspartate 168 together coordinate ATP.

It belongs to the UMP kinase family. Homohexamer.

The protein resides in the cytoplasm. The enzyme catalyses UMP + ATP = UDP + ADP. It functions in the pathway pyrimidine metabolism; CTP biosynthesis via de novo pathway; UDP from UMP (UMPK route): step 1/1. Its activity is regulated as follows. Allosterically activated by GTP. Inhibited by UTP. In terms of biological role, catalyzes the reversible phosphorylation of UMP to UDP. The polypeptide is Uridylate kinase (Synechococcus sp. (strain CC9311)).